A 161-amino-acid polypeptide reads, in one-letter code: Small ribosomal subunit protein eS6 (161 aa).

Residues V119–E161 form a disordered region. Over residues G122–E161 the composition is skewed to acidic residues.

It belongs to the eukaryotic ribosomal protein eS6 family.

In Haloquadratum walsbyi (strain DSM 16790 / HBSQ001), this protein is Small ribosomal subunit protein eS6.